A 184-amino-acid polypeptide reads, in one-letter code: UPF0397 protein SAR2767 (184 aa).

The next 5 helical transmembrane spans lie at 11-31 (VVAI…VVIP), 44-64 (AFLA…TGLI), 77-97 (AWWS…WIGL), 117-137 (GQII…DILI), and 148-168 (QGVI…TILL).

It belongs to the UPF0397 family.

Its subcellular location is the cell membrane. This Staphylococcus aureus (strain MRSA252) protein is UPF0397 protein SAR2767.